Here is a 131-residue protein sequence, read N- to C-terminus: Small ribosomal subunit protein uS8 (131 aa).

Belongs to the universal ribosomal protein uS8 family. In terms of assembly, part of the 30S ribosomal subunit. Contacts proteins S5 and S12.

One of the primary rRNA binding proteins, it binds directly to 16S rRNA central domain where it helps coordinate assembly of the platform of the 30S subunit. The protein is Small ribosomal subunit protein uS8 of Geobacillus stearothermophilus (Bacillus stearothermophilus).